The following is a 485-amino-acid chain: Tektin-5 (485 aa).

Coiled-coil stretches lie at residues 113–185 (SRLT…EVNC), 225–251 (QQQM…ALER), 342–385 (FNAR…MAKE), and 423–443 (DDTL…LQLL).

It belongs to the tektin family. As to quaternary structure, microtubule inner protein component of sperm flagellar doublet microtubules. Interacts with TEKT3. Ubiquitinated, leading to its degradation. Deubiquitinated by USP16, promoting its stability.

The protein resides in the cytoplasm. It is found in the cytoskeleton. The protein localises to the flagellum axoneme. Functionally, sperm-specific microtubule inner protein (MIP) part of the dynein-decorated doublet microtubules (DMTs) in flagellar axoneme. Forms an extensive interaction network in different conformations that reinforces the helix bundle composed by other tektin proteins (TEKT1 to TEKT4) and MIPs to anchor the tektin bundle onto the tubulin wall of A-tubule of the sperm flagellum. The polypeptide is Tektin-5 (TEKT5) (Macaca fascicularis (Crab-eating macaque)).